We begin with the raw amino-acid sequence, 247 residues long: Chalcone--flavanone isomerase (247 aa).

Thr-56, Asn-121, and Ser-198 together coordinate substrate. A compositionally biased stretch (basic and acidic residues) spans 223–235; that stretch reads ENKVEEDATKTDQ. Positions 223–247 are disordered; it reads ENKVEEDATKTDQEEANDLSLAKEN.

It belongs to the chalcone isomerase family.

It catalyses the reaction a chalcone = a flavanone.. It participates in secondary metabolite biosynthesis; flavonoid biosynthesis. Functionally, catalyzes the intramolecular cyclization of bicyclic chalcones into tricyclic (S)-flavanones. Responsible for the isomerization of 4,2',4',6'-tetrahydroxychalcone (also termed chalcone) into naringenin. This Raphanus sativus (Radish) protein is Chalcone--flavanone isomerase (CHI).